A 66-amino-acid polypeptide reads, in one-letter code: Large ribosomal subunit protein bL33c (66 aa).

This sequence belongs to the bacterial ribosomal protein bL33 family.

Its subcellular location is the plastid. The protein resides in the chloroplast. The protein is Large ribosomal subunit protein bL33c of Phalaenopsis aphrodite subsp. formosana (Moth orchid).